The sequence spans 171 residues: Der GTPase-activating protein YihI (171 aa).

Disordered regions lie at residues 1–99 (MKKP…QAEL) and 145–171 (LSYD…RGGN). The segment covering 20–30 (TREELNQEARD) has biased composition (basic and acidic residues). Positions 31 to 40 (RKRLKKHRGH) are enriched in basic residues. A compositionally biased stretch (acidic residues) spans 147–160 (YDDDDEDDEEDEKQ).

This sequence belongs to the YihI family. In terms of assembly, interacts with Der.

A GTPase-activating protein (GAP) that modifies Der/EngA GTPase function. May play a role in ribosome biogenesis. This chain is Der GTPase-activating protein YihI, found in Salmonella choleraesuis (strain SC-B67).